A 312-amino-acid polypeptide reads, in one-letter code: HPr kinase/phosphorylase (312 aa).

Residues His139 and Lys160 contribute to the active site. 154–161 (GSSGVGKS) contacts ATP. Ser161 serves as a coordination point for Mg(2+). Catalysis depends on Asp178, which acts as the Proton acceptor; for phosphorylation activity. Proton donor; for dephosphorylation activity. The segment at 202 to 211 (LEIRGLGIIN) is important for the catalytic mechanism of both phosphorylation and dephosphorylation. Glu203 lines the Mg(2+) pocket. Arg244 is an active-site residue. Positions 265–270 (PVRPGR) are important for the catalytic mechanism of dephosphorylation.

This sequence belongs to the HPrK/P family. In terms of assembly, homohexamer. Requires Mg(2+) as cofactor.

The catalysed reaction is [HPr protein]-L-serine + ATP = [HPr protein]-O-phospho-L-serine + ADP + H(+). It carries out the reaction [HPr protein]-O-phospho-L-serine + phosphate + H(+) = [HPr protein]-L-serine + diphosphate. Catalyzes the ATP- as well as the pyrophosphate-dependent phosphorylation of a specific serine residue in HPr, a phosphocarrier protein of the phosphoenolpyruvate-dependent sugar phosphotransferase system (PTS). HprK/P also catalyzes the pyrophosphate-producing, inorganic phosphate-dependent dephosphorylation (phosphorolysis) of seryl-phosphorylated HPr (P-Ser-HPr). The two antagonistic activities of HprK/P are regulated by several intracellular metabolites, which change their concentration in response to the absence or presence of rapidly metabolisable carbon sources (glucose, fructose, etc.) in the growth medium. Therefore, by controlling the phosphorylation state of HPr, HPrK/P is a sensor enzyme that plays a major role in the regulation of carbon metabolism and sugar transport: it mediates carbon catabolite repression (CCR), and regulates PTS-catalyzed carbohydrate uptake and inducer exclusion. The sequence is that of HPr kinase/phosphorylase from Listeria innocua serovar 6a (strain ATCC BAA-680 / CLIP 11262).